Reading from the N-terminus, the 709-residue chain is Polyribonucleotide nucleotidyltransferase (709 aa).

Residues Asp-491 and Asp-497 each coordinate Mg(2+). The region spanning 557–617 (PKSESFMIPP…ENLQKAKTFI (61 aa)) is the KH domain. One can recognise an S1 motif domain in the interval 641–709 (GERFVGKIKK…KNKVELGLVE (69 aa)).

Belongs to the polyribonucleotide nucleotidyltransferase family. Mg(2+) serves as cofactor.

Its subcellular location is the cytoplasm. The enzyme catalyses RNA(n+1) + phosphate = RNA(n) + a ribonucleoside 5'-diphosphate. Involved in mRNA degradation. Catalyzes the phosphorolysis of single-stranded polyribonucleotides processively in the 3'- to 5'-direction. In Helicobacter hepaticus (strain ATCC 51449 / 3B1), this protein is Polyribonucleotide nucleotidyltransferase.